The sequence spans 241 residues: Pyridoxal phosphate phosphatase PHOSPHO2 (241 aa).

Asp-8 (nucleophile) is an active-site residue. Mg(2+)-binding residues include Asp-8 and Asp-10. Asp-10 serves as the catalytic Proton donor. Substrate-binding residues include Asp-19 and Asp-99. Asp-179 provides a ligand contact to Mg(2+).

Belongs to the HAD-like hydrolase superfamily. PHOSPHO family. Requires Mg(2+) as cofactor.

It carries out the reaction pyridoxal 5'-phosphate + H2O = pyridoxal + phosphate. Its function is as follows. Phosphatase that has high activity toward pyridoxal 5'-phosphate (PLP). Also active at much lower level toward pyrophosphate, phosphoethanolamine (PEA), phosphocholine (PCho), phospho-l-tyrosine, fructose-6-phosphate, p-nitrophenyl phosphate, and h-glycerophosphate. This chain is Pyridoxal phosphate phosphatase PHOSPHO2 (PHOSPHO2), found in Bos taurus (Bovine).